The primary structure comprises 268 residues: Glutamate racemase (268 aa).

Residues 13 to 14 and 45 to 46 contribute to the substrate site; these read DS and YG. The active-site Proton donor/acceptor is the Cys-77. Residue 78-79 participates in substrate binding; it reads NT. The active-site Proton donor/acceptor is Cys-185. 186 to 187 serves as a coordination point for substrate; it reads TH.

The protein belongs to the aspartate/glutamate racemases family.

It carries out the reaction L-glutamate = D-glutamate. Its pathway is cell wall biogenesis; peptidoglycan biosynthesis. Functionally, provides the (R)-glutamate required for cell wall biosynthesis. The polypeptide is Glutamate racemase (Vibrio campbellii (strain ATCC BAA-1116)).